A 390-amino-acid chain; its full sequence is Transforming growth factor beta-1 proprotein (390 aa).

Positions 1–29 (MPPSRLRLLPLLLPLLWLLVLAPGRPASG) are cleaved as a signal peptide. Positions 30–74 (LSTCKTIDMELVKRKRIEAIRGQILSKLRLASPPSQGDVPPGPLP) are straightjacket domain. The tract at residues 75 to 271 (EAVLALYNST…ATPLERAQHL (197 aa)) is arm domain. 3 N-linked (GlcNAc...) asparagine glycosylation sites follow: Asn82, Asn136, and Asn176. The tract at residues 226–252 (DSKDNTLRVEINGIGPKRRGDLAAIHG) is bowtie tail. Residues 244 to 246 (RGD) carry the Cell attachment site motif. Intrachain disulfides connect Cys285/Cys294, Cys293/Cys356, Cys322/Cys387, and Cys326/Cys389.

It belongs to the TGF-beta family. In terms of assembly, homodimer; disulfide-linked. Interacts with the serine proteases, HTRA1 and HTRA3: the interaction with either inhibits TGFB1-mediated signaling and the HTRA protease activity is required for this inhibition. May interact with THSD4; this interaction may lead to sequestration by FBN1 microfibril assembly and attenuation of TGFB signaling. Interacts with CD109, DPT and ASPN. Interacts with EFEMP2. Interacts with TSKU; the interaction contributes to regulation of the hair cycle. Interacts with TGFBR3. As to quaternary structure, homodimer; disulfide-linked. Interacts with transforming growth factor beta-1 (TGF-beta-1) chain; interaction is non-covalent and maintains TGF-beta-1 in a latent state; each latency-associated peptide (LAP) monomer interacts with TGF-beta-1 in the other monomer. Interacts with LTBP1; leading to regulation of TGF-beta-1 activation. Interacts with LRRC32/GARP; leading to regulation of TGF-beta-1 activation on the surface of activated regulatory T-cells (Tregs). Interacts with LRRC33/NRROS; leading to regulation of TGF-beta-1 in macrophages and microglia. Interacts (via cell attachment site) with integrins ITGAV and ITGB6 (ITGAV:ITGB6), leading to release of the active TGF-beta-1. Interacts with NREP; the interaction results in a decrease in TGFB1 autoinduction. Interacts with HSP90AB1; inhibits latent TGFB1 activation. Homodimer; disulfide-linked. Interacts with TGF-beta receptors (TGFBR1 and TGFBR2), leading to signal transduction. Transforming growth factor beta-1 proprotein: The precursor proprotein is cleaved in the Golgi apparatus by FURIN to form Transforming growth factor beta-1 (TGF-beta-1) and Latency-associated peptide (LAP) chains, which remain non-covalently linked, rendering TGF-beta-1 inactive. In terms of processing, N-glycosylated. Deglycosylation leads to activation of Transforming growth factor beta-1 (TGF-beta-1); mechanisms triggering deglycosylation-driven activation of TGF-beta-1 are however unclear.

It localises to the secreted. It is found in the extracellular space. Its subcellular location is the extracellular matrix. In terms of biological role, transforming growth factor beta-1 proprotein: Precursor of the Latency-associated peptide (LAP) and Transforming growth factor beta-1 (TGF-beta-1) chains, which constitute the regulatory and active subunit of TGF-beta-1, respectively. Required to maintain the Transforming growth factor beta-1 (TGF-beta-1) chain in a latent state during storage in extracellular matrix. Associates non-covalently with TGF-beta-1 and regulates its activation via interaction with 'milieu molecules', such as LTBP1, LRRC32/GARP and LRRC33/NRROS, that control activation of TGF-beta-1. Interaction with LRRC33/NRROS regulates activation of TGF-beta-1 in macrophages and microglia. Interaction with LRRC32/GARP controls activation of TGF-beta-1 on the surface of activated regulatory T-cells (Tregs). Interaction with integrins (ITGAV:ITGB6 or ITGAV:ITGB8) results in distortion of the Latency-associated peptide chain and subsequent release of the active TGF-beta-1. Its function is as follows. Multifunctional protein that regulates the growth and differentiation of various cell types and is involved in various processes, such as normal development, immune function, microglia function and responses to neurodegeneration. Activation into mature form follows different steps: following cleavage of the proprotein in the Golgi apparatus, Latency-associated peptide (LAP) and Transforming growth factor beta-1 (TGF-beta-1) chains remain non-covalently linked rendering TGF-beta-1 inactive during storage in extracellular matrix. At the same time, LAP chain interacts with 'milieu molecules', such as LTBP1, LRRC32/GARP and LRRC33/NRROS that control activation of TGF-beta-1 and maintain it in a latent state during storage in extracellular milieus. TGF-beta-1 is released from LAP by integrins (ITGAV:ITGB6 or ITGAV:ITGB8): integrin-binding to LAP stabilizes an alternative conformation of the LAP bowtie tail and results in distortion of the LAP chain and subsequent release of the active TGF-beta-1. Once activated following release of LAP, TGF-beta-1 acts by binding to TGF-beta receptors (TGFBR1 and TGFBR2), which transduce signal. While expressed by many cells types, TGF-beta-1 only has a very localized range of action within cell environment thanks to fine regulation of its activation by Latency-associated peptide chain (LAP) and 'milieu molecules'. Plays an important role in bone remodeling: acts as a potent stimulator of osteoblastic bone formation, causing chemotaxis, proliferation and differentiation in committed osteoblasts. Can promote either T-helper 17 cells (Th17) or regulatory T-cells (Treg) lineage differentiation in a concentration-dependent manner. At high concentrations, leads to FOXP3-mediated suppression of RORC and down-regulation of IL-17 expression, favoring Treg cell development. At low concentrations in concert with IL-6 and IL-21, leads to expression of the IL-17 and IL-23 receptors, favoring differentiation to Th17 cells. Stimulates sustained production of collagen through the activation of CREB3L1 by regulated intramembrane proteolysis (RIP). Mediates SMAD2/3 activation by inducing its phosphorylation and subsequent translocation to the nucleus. Positively regulates odontoblastic differentiation in dental papilla cells, via promotion of IPO7-mediated translocation of phosphorylated SMAD2 to the nucleus and subsequent transcription of target genes. Can induce epithelial-to-mesenchymal transition (EMT) and cell migration in various cell types. The sequence is that of Transforming growth factor beta-1 proprotein (TGFB1) from Cavia porcellus (Guinea pig).